The sequence spans 274 residues: Large ribosomal subunit protein uL2 (274 aa).

The segment at 223–265 (VVMNPVDHPHGGGEGRTSGGRHPVSPWGVPTKGYKTRSNKRTD) is disordered.

It belongs to the universal ribosomal protein uL2 family. In terms of assembly, part of the 50S ribosomal subunit. Forms a bridge to the 30S subunit in the 70S ribosome.

In terms of biological role, one of the primary rRNA binding proteins. Required for association of the 30S and 50S subunits to form the 70S ribosome, for tRNA binding and peptide bond formation. It has been suggested to have peptidyltransferase activity; this is somewhat controversial. Makes several contacts with the 16S rRNA in the 70S ribosome. The protein is Large ribosomal subunit protein uL2 of Vibrio vulnificus (strain CMCP6).